The primary structure comprises 441 residues: Protein kinase C and casein kinase substrate in neurons protein 1 (441 aa).

Residues Ser2 and Ser76 each carry the phosphoserine modification. Residues 10-280 (EEITDSFWEV…AIRGADAQED (271 aa)) enclose the F-BAR domain. Residues 23-272 (KRTVKRIDDG…HVYRELEQAI (250 aa)) are a coiled coil. Thr181 is subject to Phosphothreonine. Residues 310–380 (AAKKEKQPKK…ANGGANPFED (71 aa)) form a disordered region. Residues 311 to 321 (AKKEKQPKKAE) are compositionally biased toward basic and acidic residues. A compositionally biased stretch (polar residues) spans 326–348 (SNATGAVESTSQAGDRGSVSSYD). Phosphoserine occurs at positions 343, 345, 346, 358, and 362. Positions 382–441 (AKGVRVRALYDYDGQEQDELSFKAGDELTKLGEEDEQGWCRGRLDSGQLGLYPANYVEAI) constitute an SH3 domain. Residue Tyr391 is modified to Phosphotyrosine. 2 positions are modified to phosphoserine: Ser402 and Ser427.

The protein belongs to the PACSIN family. As to quaternary structure, homodimer. May form heterooligomers with other PACSINs. Interacts with MAPT. Interacts with TRPV4. Interacts (via SH3 domain) with SYNJ1 and WASL. Interacts (via SH3 domain) with DNM1; the interaction is reduced by DNM1 phosphorylation. Interacts with DNM2 and DNM3. Interacts with both COBL and DBNL. Identified in a complex composed of COBL, PACSIN1 and WASL. Interacts with EHD1 and EHD3. In terms of processing, phosphorylated by casein kinase 2 (CK2) and protein kinase C (PKC). Highly expressed in brain (at protein level).

It is found in the cytoplasm. Its subcellular location is the cell projection. The protein localises to the synapse. The protein resides in the synaptosome. It localises to the ruffle membrane. It is found in the membrane. Its subcellular location is the cytoplasmic vesicle membrane. The protein localises to the cytosol. The protein resides in the cell membrane. Functionally, binds to membranes via its F-BAR domain and mediates membrane tubulation. Plays a role in the reorganization of the microtubule cytoskeleton via its interaction with MAPT; this decreases microtubule stability and inhibits MAPT-induced microtubule polymerization. Plays a role in cellular transport processes by recruiting DNM1, DNM2 and DNM3 to membranes. Plays a role in the reorganization of the actin cytoskeleton and in neuron morphogenesis via its interaction with COBL and WASL, and by recruiting COBL to the cell cortex. Plays a role in the regulation of neurite formation, neurite branching and the regulation of neurite length. Required for normal synaptic vesicle endocytosis; this process retrieves previously released neurotransmitters to accommodate multiple cycles of neurotransmission. Required for normal excitatory and inhibitory synaptic transmission. The protein is Protein kinase C and casein kinase substrate in neurons protein 1 (Pacsin1) of Rattus norvegicus (Rat).